Reading from the N-terminus, the 598-residue chain is Aspartate--tRNA(Asp/Asn) ligase (598 aa).

Glu177 is a binding site for L-aspartate. An aspartate region spans residues 201-204 (QLFK). Arg223 contributes to the L-aspartate binding site. Residues 223–225 (RDE) and Gln232 each bind ATP. His456 lines the L-aspartate pocket. An ATP-binding site is contributed by Glu493. Arg500 contacts L-aspartate. 545–548 (GLDR) contacts ATP.

It belongs to the class-II aminoacyl-tRNA synthetase family. Type 1 subfamily. In terms of assembly, homodimer.

It is found in the cytoplasm. It carries out the reaction tRNA(Asx) + L-aspartate + ATP = L-aspartyl-tRNA(Asx) + AMP + diphosphate. Functionally, aspartyl-tRNA synthetase with relaxed tRNA specificity since it is able to aspartylate not only its cognate tRNA(Asp) but also tRNA(Asn). Reaction proceeds in two steps: L-aspartate is first activated by ATP to form Asp-AMP and then transferred to the acceptor end of tRNA(Asp/Asn). This Prochlorococcus marinus (strain AS9601) protein is Aspartate--tRNA(Asp/Asn) ligase.